The primary structure comprises 359 residues: Replication-associated protein (359 aa).

The CRESS-DNA virus Rep endonuclease domain maps to 8–116 (QINAKHYFLT…DGDVLEWGTF (109 aa)). The RCR-1 signature appears at 15–18 (FLTF). 3 residues coordinate a divalent metal cation: glutamate 49, histidine 57, and histidine 59. An RCR-2 motif is present at residues 57 to 59 (HLH). The active-site For DNA cleavage activity is tyrosine 103. Residues 103 to 106 (YIDK) carry the RCR-3 motif. Aspartate 107 serves as a coordination point for a divalent metal cation. Residues 143-153 (KSEALDVIKEL) form a binding to RBR1 region. The oligomerization stretch occupies residues 156–176 (RDYILHFHNINSNLNMVFQVP). Residue 221 to 228 (GDSRTGKT) coordinates ATP.

This sequence belongs to the geminiviridae Rep protein family. In terms of assembly, homooligomer. Interacts with the replication enhancer protein (REn). Interacts with host retinoblastoma-related protein 1 (RBR1), and may thereby induce the transcription of host replicative enzymes even if the cell is not dividing anymore. Interacts with host PCNA. Interacts with host SCE1 protein. Mg(2+) is required as a cofactor. Requires Mn(2+) as cofactor.

The protein resides in the host nucleus. In terms of biological role, essential for the replication of viral ssDNA. The closed circular ssDNA genome is first converted to a superhelical dsDNA. Rep binds a specific region at the genome origin of replication. It introduces an endonucleolytic nick within the conserved sequence 5'-TAATATTAC-3' in the intergenic region of the genome present in all geminiviruses, thereby initiating the rolling circle replication (RCR). Following cleavage, binds covalently to the 5'-phosphate of DNA as a tyrosyl ester. The cleavage gives rise to a free 3'-OH that serves as a primer for the cellular DNA polymerase. The polymerase synthesizes the (+) strand DNA by rolling circle mechanism. After one round of replication, a Rep-catalyzed nucleotidyl transfer reaction releases a circular single-stranded virus genome, thereby terminating the replication. Displays origin-specific DNA cleavage, nucleotidyl transferase, ATPase and helicase activities. This Solanum lycopersicum (Tomato) protein is Replication-associated protein.